The chain runs to 203 residues: Small ribosomal subunit protein uS4 (203 aa).

The 64-residue stretch at 93-156 (RRLDNVVYRL…MKVPAILEAV (64 aa)) folds into the S4 RNA-binding domain.

This sequence belongs to the universal ribosomal protein uS4 family. Part of the 30S ribosomal subunit. Contacts protein S5. The interaction surface between S4 and S5 is involved in control of translational fidelity.

In terms of biological role, one of the primary rRNA binding proteins, it binds directly to 16S rRNA where it nucleates assembly of the body of the 30S subunit. With S5 and S12 plays an important role in translational accuracy. The sequence is that of Small ribosomal subunit protein uS4 from Streptococcus pyogenes serotype M4 (strain MGAS10750).